Consider the following 273-residue polypeptide: Phosphate import ATP-binding protein PstB (273 aa).

The 240-residue stretch at 19-258 (LSLQNVTISY…FNDTDKIFNA (240 aa)) folds into the ABC transporter domain. 51–58 (GPSGCGKS) is a binding site for ATP.

Belongs to the ABC transporter superfamily. Phosphate importer (TC 3.A.1.7) family. The complex is composed of two ATP-binding proteins (PstB), two transmembrane proteins (PstC and PstA) and a solute-binding protein (PstS).

The protein localises to the cell inner membrane. The catalysed reaction is phosphate(out) + ATP + H2O = ADP + 2 phosphate(in) + H(+). Its function is as follows. Part of the ABC transporter complex PstSACB involved in phosphate import. Responsible for energy coupling to the transport system. This Synechococcus sp. (strain CC9605) protein is Phosphate import ATP-binding protein PstB.